The chain runs to 306 residues: Homoserine O-acetyltransferase (306 aa).

The active-site Acyl-thioester intermediate is cysteine 142. Residues lysine 163 and serine 192 each contribute to the substrate site. Histidine 235 acts as the Proton acceptor in catalysis. Residue glutamate 237 is part of the active site. Arginine 249 contributes to the substrate binding site.

This sequence belongs to the MetA family.

Its subcellular location is the cytoplasm. The catalysed reaction is L-homoserine + acetyl-CoA = O-acetyl-L-homoserine + CoA. It functions in the pathway amino-acid biosynthesis; L-methionine biosynthesis via de novo pathway; O-acetyl-L-homoserine from L-homoserine: step 1/1. Its function is as follows. Transfers an acetyl group from acetyl-CoA to L-homoserine, forming acetyl-L-homoserine. The polypeptide is Homoserine O-acetyltransferase (Brucella melitensis biotype 1 (strain ATCC 23456 / CCUG 17765 / NCTC 10094 / 16M)).